The following is a 287-amino-acid chain: Ribosomal RNA small subunit methyltransferase I (287 aa).

Belongs to the methyltransferase superfamily. RsmI family.

The protein localises to the cytoplasm. The enzyme catalyses cytidine(1402) in 16S rRNA + S-adenosyl-L-methionine = 2'-O-methylcytidine(1402) in 16S rRNA + S-adenosyl-L-homocysteine + H(+). In terms of biological role, catalyzes the 2'-O-methylation of the ribose of cytidine 1402 (C1402) in 16S rRNA. This Streptococcus pyogenes serotype M18 (strain MGAS8232) protein is Ribosomal RNA small subunit methyltransferase I.